Consider the following 95-residue polypeptide: Protein TusB (95 aa).

It belongs to the DsrH/TusB family. In terms of assembly, heterohexamer, formed by a dimer of trimers. The hexameric TusBCD complex contains 2 copies each of TusB, TusC and TusD. The TusBCD complex interacts with TusE.

The protein resides in the cytoplasm. Functionally, part of a sulfur-relay system required for 2-thiolation of 5-methylaminomethyl-2-thiouridine (mnm(5)s(2)U) at tRNA wobble positions. This Escherichia coli (strain SMS-3-5 / SECEC) protein is Protein TusB.